A 130-amino-acid polypeptide reads, in one-letter code: Small ribosomal subunit protein uS9 (130 aa).

The protein belongs to the universal ribosomal protein uS9 family.

The protein is Small ribosomal subunit protein uS9 of Thiobacillus denitrificans (strain ATCC 25259 / T1).